A 141-amino-acid chain; its full sequence is ATP synthase epsilon chain (141 aa).

Belongs to the ATPase epsilon chain family. F-type ATPases have 2 components, CF(1) - the catalytic core - and CF(0) - the membrane proton channel. CF(1) has five subunits: alpha(3), beta(3), gamma(1), delta(1), epsilon(1). CF(0) has three main subunits: a, b and c.

It is found in the cell inner membrane. Produces ATP from ADP in the presence of a proton gradient across the membrane. This Acidithiobacillus ferridurans protein is ATP synthase epsilon chain (atpC).